A 131-amino-acid polypeptide reads, in one-letter code: Interleukin-13 (131 aa).

Residues 1–18 (MALWLTLVIALTCFGGLA) form the signal peptide. Residues Asn39, Asn50, Asn58, and Asn74 are each glycosylated (N-linked (GlcNAc...) asparagine). 2 disulfides stabilise this stretch: Cys49–Cys78 and Cys66–Cys92.

The protein belongs to the IL-4/IL-13 family. In terms of assembly, interacts with IL13RA2.

It is found in the secreted. In terms of biological role, cytokine that plays important roles in allergic inflammation and immune response to parasite infection. Synergizes with IL2 in regulating interferon-gamma synthesis. Stimulates B-cell proliferation, and activation of eosinophils, basophils, and mast cells. Plays an important role in controlling IL33 activity by modulating the production of transmembrane and soluble forms of interleukin-1 receptor-like 1/IL1RL1. Displays the capacity to antagonize Th1-driven proinflammatory immune response and downregulates synthesis of many proinflammatory cytokines including IL1, IL6, IL10, IL12 and TNF-alpha through a mechanism that partially involves suppression of NF-kappa-B. Also functions on nonhematopoietic cells, including endothelial cells where it induces vascular cell adhesion protein 1/VCAM1, which is important in the recruitment of eosinophils. Exerts its biological effects through its receptors which comprises the IL4R chain and the IL13RA1 chain, to activate JAK1 and TYK2, leading to the activation of STAT6. Aside from IL13RA1, another receptor IL13RA2 acts as a high affinity decoy for IL13 and mediates internalization and depletion of extracellular IL13. The protein is Interleukin-13 (IL13) of Sus scrofa (Pig).